Here is a 129-residue protein sequence, read N- to C-terminus: Histone H2A.2 (129 aa).

Lysine 5 is subject to N6-acetyllysine. Glutamine 108 is subject to N5-methylglutamine.

It belongs to the histone H2A family. In terms of assembly, the nucleosome is a histone octamer containing two molecules each of H2A, H2B, H3 and H4 assembled in one H3-H4 heterotetramer and two H2A-H2B heterodimers. The octamer wraps approximately 147 bp of DNA. In terms of processing, acetylated by ESA1 to form H2AK4ac.

The protein resides in the nucleus. The protein localises to the chromosome. Its function is as follows. Core component of nucleosome which plays a central role in DNA double strand break (DSB) repair. Nucleosomes wrap and compact DNA into chromatin, limiting DNA accessibility to the cellular machineries which require DNA as a template. Histones thereby play a central role in transcription regulation, DNA repair, DNA replication and chromosomal stability. DNA accessibility is regulated via a complex set of post-translational modifications of histones, also called histone code, and nucleosome remodeling. The polypeptide is Histone H2A.2 (HTA2) (Lodderomyces elongisporus (strain ATCC 11503 / CBS 2605 / JCM 1781 / NBRC 1676 / NRRL YB-4239) (Yeast)).